The following is a 156-amino-acid chain: Ribosome maturation factor RimP (156 aa).

Belongs to the RimP family.

The protein resides in the cytoplasm. In terms of biological role, required for maturation of 30S ribosomal subunits. This chain is Ribosome maturation factor RimP, found in Dictyoglomus thermophilum (strain ATCC 35947 / DSM 3960 / H-6-12).